A 364-amino-acid polypeptide reads, in one-letter code: Pectinesterase 1 (364 aa).

A signal peptide spans 1–22; that stretch reads MSCIAVEAVLLGILLYIPIVLS. The N-linked (GlcNAc...) asparagine glycan is linked to Asn-103. Residue Asp-220 is part of the active site.

This sequence belongs to the pectinesterase family. In terms of processing, glycosylated. As to expression, expressed in pollen.

It is found in the secreted. The catalysed reaction is [(1-&gt;4)-alpha-D-galacturonosyl methyl ester](n) + n H2O = [(1-&gt;4)-alpha-D-galacturonosyl](n) + n methanol + n H(+). Its pathway is glycan metabolism; pectin degradation; 2-dehydro-3-deoxy-D-gluconate from pectin: step 1/5. Catalyzes the demethylesterification of homogalacturonan components of pectin. May be involved in pollen tube development. The protein is Pectinesterase 1 of Olea europaea (Common olive).